The sequence spans 360 residues: Aminomethyltransferase (360 aa).

This sequence belongs to the GcvT family. The glycine cleavage system is composed of four proteins: P, T, L and H.

The catalysed reaction is N(6)-[(R)-S(8)-aminomethyldihydrolipoyl]-L-lysyl-[protein] + (6S)-5,6,7,8-tetrahydrofolate = N(6)-[(R)-dihydrolipoyl]-L-lysyl-[protein] + (6R)-5,10-methylene-5,6,7,8-tetrahydrofolate + NH4(+). The glycine cleavage system catalyzes the degradation of glycine. This is Aminomethyltransferase from Legionella pneumophila (strain Corby).